The sequence spans 640 residues: 1-deoxy-D-xylulose-5-phosphate synthase (640 aa).

Residues His72 and 113–115 contribute to the thiamine diphosphate site; that span reads GHA. Mg(2+) is bound at residue Asp144. Thiamine diphosphate-binding positions include 145-146, Asn174, Tyr287, and Glu370; that span reads GA. Asn174 contributes to the Mg(2+) binding site.

This sequence belongs to the transketolase family. DXPS subfamily. Homodimer. Mg(2+) is required as a cofactor. Requires thiamine diphosphate as cofactor.

It catalyses the reaction D-glyceraldehyde 3-phosphate + pyruvate + H(+) = 1-deoxy-D-xylulose 5-phosphate + CO2. It participates in metabolic intermediate biosynthesis; 1-deoxy-D-xylulose 5-phosphate biosynthesis; 1-deoxy-D-xylulose 5-phosphate from D-glyceraldehyde 3-phosphate and pyruvate: step 1/1. Its function is as follows. Catalyzes the acyloin condensation reaction between C atoms 2 and 3 of pyruvate and glyceraldehyde 3-phosphate to yield 1-deoxy-D-xylulose-5-phosphate (DXP). In Synechocystis sp. (strain ATCC 27184 / PCC 6803 / Kazusa), this protein is 1-deoxy-D-xylulose-5-phosphate synthase.